A 240-amino-acid polypeptide reads, in one-letter code: Probable transcriptional regulatory protein HPG27_148 (240 aa).

Belongs to the TACO1 family.

The protein resides in the cytoplasm. This Helicobacter pylori (strain G27) protein is Probable transcriptional regulatory protein HPG27_148.